The primary structure comprises 64 residues: Copper-specific metallothionein-2 (64 aa).

16 residues coordinate Cu(+): Cys3, Cys5, Cys9, Cys11, Cys16, Cys18, Cys22, Cys24, Cys27, Cys33, Cys40, Cys44, Cys50, Cys52, Cys56, and Cys58.

The protein belongs to the metallothionein superfamily. Type 2 family.

The metallothioneins are involved in the cellular sequestration of toxic metal ions and regulation of essential trace elements. This isoform binds exclusively copper. The protein is Copper-specific metallothionein-2 of Callinectes sapidus (Blue crab).